Reading from the N-terminus, the 160-residue chain is 2-C-methyl-D-erythritol 2,4-cyclodiphosphate synthase (160 aa).

Residues aspartate 9 and histidine 11 each coordinate a divalent metal cation. 4-CDP-2-C-methyl-D-erythritol 2-phosphate is bound by residues 9 to 11 (DVH) and 35 to 36 (HS). Histidine 43 is an a divalent metal cation binding site. 4-CDP-2-C-methyl-D-erythritol 2-phosphate is bound by residues 57–59 (DIG), 62–66 (FPDTD), 101–107 (AQKPKMA), 133–136 (TTTE), phenylalanine 140, and arginine 143.

Belongs to the IspF family. As to quaternary structure, homotrimer. It depends on a divalent metal cation as a cofactor.

The enzyme catalyses 4-CDP-2-C-methyl-D-erythritol 2-phosphate = 2-C-methyl-D-erythritol 2,4-cyclic diphosphate + CMP. It participates in isoprenoid biosynthesis; isopentenyl diphosphate biosynthesis via DXP pathway; isopentenyl diphosphate from 1-deoxy-D-xylulose 5-phosphate: step 4/6. Functionally, involved in the biosynthesis of isopentenyl diphosphate (IPP) and dimethylallyl diphosphate (DMAPP), two major building blocks of isoprenoid compounds. Catalyzes the conversion of 4-diphosphocytidyl-2-C-methyl-D-erythritol 2-phosphate (CDP-ME2P) to 2-C-methyl-D-erythritol 2,4-cyclodiphosphate (ME-CPP) with a corresponding release of cytidine 5-monophosphate (CMP). The sequence is that of 2-C-methyl-D-erythritol 2,4-cyclodiphosphate synthase from Geobacillus thermodenitrificans (strain NG80-2).